A 62-amino-acid chain; its full sequence is Sperm protamine P1 (62 aa).

The segment at 1–62 (MARYRHSRSR…RYSRRRRRRY (62 aa)) is disordered.

Belongs to the protamine P1 family. In terms of tissue distribution, testis.

The protein localises to the nucleus. Its subcellular location is the chromosome. Protamines substitute for histones in the chromatin of sperm during the haploid phase of spermatogenesis. They compact sperm DNA into a highly condensed, stable and inactive complex. This is Sperm protamine P1 (PRM1) from Notamacropus eugenii (Tammar wallaby).